Reading from the N-terminus, the 1185-residue chain is Chromosome partition protein Smc (1185 aa).

Residue 32-39 (PNGSGKSN) participates in ATP binding. Residues 228-503 (SRLVKKLTIA…LQAVQERYTN (276 aa)) adopt a coiled-coil conformation. A disordered region spans residues 300–323 (TQGQQGVDAERRQNQQSEQERLTA). Over residues 307 to 320 (DAERRQNQQSEQER) the composition is skewed to basic and acidic residues. Residues 519 to 637 (SGVAGAVSEL…VDTLDHAMAI (119 aa)) enclose the SMC hinge domain. 2 coiled-coil regions span residues 675-928 (QQQQ…RRLE) and 989-1025 (AIDE…ADLD).

This sequence belongs to the SMC family. Homodimer.

Its subcellular location is the cytoplasm. Its function is as follows. Required for chromosome condensation and partitioning. In Lactiplantibacillus plantarum (strain ATCC BAA-793 / NCIMB 8826 / WCFS1) (Lactobacillus plantarum), this protein is Chromosome partition protein Smc.